We begin with the raw amino-acid sequence, 205 residues long: Ribosomal RNA small subunit methyltransferase G (205 aa).

Residues glycine 73, leucine 78, 124–125 (VE), and arginine 139 contribute to the S-adenosyl-L-methionine site.

Belongs to the methyltransferase superfamily. RNA methyltransferase RsmG family.

The protein resides in the cytoplasm. The enzyme catalyses guanosine(527) in 16S rRNA + S-adenosyl-L-methionine = N(7)-methylguanosine(527) in 16S rRNA + S-adenosyl-L-homocysteine. Functionally, specifically methylates the N7 position of guanine in position 527 of 16S rRNA. The protein is Ribosomal RNA small subunit methyltransferase G of Erwinia tasmaniensis (strain DSM 17950 / CFBP 7177 / CIP 109463 / NCPPB 4357 / Et1/99).